Reading from the N-terminus, the 123-residue chain is Transmembrane protein 049L (123 aa).

Helical transmembrane passes span 67 to 87 (VFGA…LWLV) and 104 to 121 (LSLQ…GVYN).

It localises to the membrane. The chain is Transmembrane protein 049L from Acheta domesticus (House cricket).